Reading from the N-terminus, the 72-residue chain is Translation initiation factor IF-1 (72 aa).

The 72-residue stretch at 1–72 folds into the S1-like domain; it reads MAREDHIEME…SKGRIVYRAR (72 aa).

This sequence belongs to the IF-1 family. As to quaternary structure, component of the 30S ribosomal translation pre-initiation complex which assembles on the 30S ribosome in the order IF-2 and IF-3, IF-1 and N-formylmethionyl-tRNA(fMet); mRNA recruitment can occur at any time during PIC assembly.

The protein localises to the cytoplasm. One of the essential components for the initiation of protein synthesis. Stabilizes the binding of IF-2 and IF-3 on the 30S subunit to which N-formylmethionyl-tRNA(fMet) subsequently binds. Helps modulate mRNA selection, yielding the 30S pre-initiation complex (PIC). Upon addition of the 50S ribosomal subunit IF-1, IF-2 and IF-3 are released leaving the mature 70S translation initiation complex. The polypeptide is Translation initiation factor IF-1 (Chromohalobacter salexigens (strain ATCC BAA-138 / DSM 3043 / CIP 106854 / NCIMB 13768 / 1H11)).